Reading from the N-terminus, the 79-residue chain is Small ribosomal subunit protein bS18 (79 aa).

This sequence belongs to the bacterial ribosomal protein bS18 family. Part of the 30S ribosomal subunit. Forms a tight heterodimer with protein bS6.

Its function is as follows. Binds as a heterodimer with protein bS6 to the central domain of the 16S rRNA, where it helps stabilize the platform of the 30S subunit. This is Small ribosomal subunit protein bS18 from Streptococcus agalactiae serotype Ia (strain ATCC 27591 / A909 / CDC SS700).